We begin with the raw amino-acid sequence, 146 residues long: Hemoglobin subunit beta (146 aa).

V1 is subject to N-acetylvaline. The Globin domain maps to 2–146 (HLSDGEKNAI…VANALAHKYH (145 aa)). S44 is subject to Phosphoserine. N6-acetyllysine is present on K59. H63 serves as a coordination point for heme b. K82 is modified (N6-acetyllysine). H92 is a heme b binding site. At C93 the chain carries S-nitrosocysteine. At K144 the chain carries N6-acetyllysine.

It belongs to the globin family. Heterotetramer of two alpha chains and two beta chains. Red blood cells.

Involved in oxygen transport from the lung to the various peripheral tissues. The sequence is that of Hemoglobin subunit beta (HBB) from Spermophilus citellus (European ground squirrel).